A 398-amino-acid polypeptide reads, in one-letter code: tRNA-specific 2-thiouridylase MnmA (398 aa).

Residues 33–40 (GMSGGVDS) and Met59 contribute to the ATP site. Positions 119-121 (NPD) are interaction with target base in tRNA. The active-site Nucleophile is the Cys124. Cys124 and Cys226 are disulfide-bonded. Gly148 contributes to the ATP binding site. Residues 176 to 178 (KDQ) form an interaction with tRNA region. Cys226 acts as the Cysteine persulfide intermediate in catalysis. Residues 343–344 (RY) form an interaction with tRNA region.

It belongs to the MnmA/TRMU family.

It localises to the cytoplasm. The enzyme catalyses S-sulfanyl-L-cysteinyl-[protein] + uridine(34) in tRNA + AH2 + ATP = 2-thiouridine(34) in tRNA + L-cysteinyl-[protein] + A + AMP + diphosphate + H(+). Catalyzes the 2-thiolation of uridine at the wobble position (U34) of tRNA, leading to the formation of s(2)U34. This is tRNA-specific 2-thiouridylase MnmA from Psychrobacter sp. (strain PRwf-1).